The chain runs to 633 residues: MGIASHSAFRERESSPTGASLDASPRPWDKGLSGREPPRHVQVRPRSAVLNMLRRLDRIRFRGHKREDLLDLAESPNASDTECGDEIPLKTPRPSPRDSEELRDPAGPGTLIMAAGVQDFNRTEFDRLNEIKGHLEIALLEKHFLQEELRKLREETNSEMLRQELDRERQRRIELEQKMQEVLKARSEEQPAQPQQPPKGQSQASNGTGTERRSQGLASRVQKWFYERFGEYIEDFRFQPEENTVETEEPLSARRLTENMRRLKRGAKPVTNFVKNLSALSDWYSIYTSAIAFTVYMNAVWHGWAIPMFLFLAILRLSLNYLIARGWRIQWSIVPEVSEAVEPAKEDLTVSEKFQLVLDVAQKAQNLFGKMADILEKIKNLFMWVQPETTQKLYVALWAAFLASCFFPYRLVGLAVGLYAGIKFFLIDFIFKRCPRLRAKYDTPYIIWRSLPTDPQLKERAGATVSRRLQTASSRSYVSSAPAGLSKDEDAGRFHSTKKGNFHEIFNLTENERPLAVCENGWRCCLINRDRKMPTDYIRNGVLYVTENYLCFESSKSGSSKRNKVIKLMDITDIQKYKVLSVLPGSGMGIAVSTPSTQKPLVFGAMVHRDEAFETIFSQYVKITSAAASGGDS.

Disordered regions lie at residues 1–46 (MGIA…VRPR), 72–109 (LAES…AGPG), and 182–216 (VLKA…RSQG). Residues 27 to 39 (PWDKGLSGREPPR) show a composition bias toward basic and acidic residues. Residues Ser75 and Ser79 each carry the phosphoserine modification. Residues 95–104 (SPRDSEELRD) show a composition bias toward basic and acidic residues. A coiled-coil region spans residues 134 to 190 (HLEIALLEKHFLQEELRKLREETNSEMLRQELDRERQRRIELEQKMQEVLKARSEEQ). Low complexity predominate over residues 190 to 205 (QPAQPQQPPKGQSQAS). The next 3 helical transmembrane spans lie at 295-315 (VYMN…LAIL), 389-409 (TTQK…FFPY), and 411-431 (LVGL…DFIF). Positions 500–578 (GNFHEIFNLT…MDITDIQKYK (79 aa)) constitute a GRAM domain.

As to quaternary structure, interacts with RTN4 (isoform B).

Its subcellular location is the mitochondrion membrane. The protein localises to the endoplasmic reticulum membrane. Plays a role as a mediator of E2F1-induced apoptosis in the absence of p53/TP53. Inhibits TLR9 response to nucelic acids and regulates TLR9-mediated innate immune response. The chain is GRAM domain-containing protein 4 from Mus musculus (Mouse).